Here is a 156-residue protein sequence, read N- to C-terminus: 6,7-dimethyl-8-ribityllumazine synthase (156 aa).

Residues phenylalanine 22, alanine 56–glutamate 58, and alanine 80–valine 82 contribute to the 5-amino-6-(D-ribitylamino)uracil site. Glutamate 85–threonine 86 contributes to the (2S)-2-hydroxy-3-oxobutyl phosphate binding site. Histidine 88 functions as the Proton donor in the catalytic mechanism. Phenylalanine 113 is a binding site for 5-amino-6-(D-ribitylamino)uracil. Arginine 127 contributes to the (2S)-2-hydroxy-3-oxobutyl phosphate binding site.

This sequence belongs to the DMRL synthase family.

The catalysed reaction is (2S)-2-hydroxy-3-oxobutyl phosphate + 5-amino-6-(D-ribitylamino)uracil = 6,7-dimethyl-8-(1-D-ribityl)lumazine + phosphate + 2 H2O + H(+). It participates in cofactor biosynthesis; riboflavin biosynthesis; riboflavin from 2-hydroxy-3-oxobutyl phosphate and 5-amino-6-(D-ribitylamino)uracil: step 1/2. Its function is as follows. Catalyzes the formation of 6,7-dimethyl-8-ribityllumazine by condensation of 5-amino-6-(D-ribitylamino)uracil with 3,4-dihydroxy-2-butanone 4-phosphate. This is the penultimate step in the biosynthesis of riboflavin. This chain is 6,7-dimethyl-8-ribityllumazine synthase, found in Pediococcus pentosaceus (strain ATCC 25745 / CCUG 21536 / LMG 10740 / 183-1w).